The following is a 193-amino-acid chain: Pre-histone-like nucleoprotein (193 aa).

N-acetylserine; by host is present on Ser2. Positions 2-24 (SIFISPSNNTGWGLRAPSKMYGG) are excised as a propeptide. At Lys48 the chain carries N6-acetyllysine; by host. Thr55 carries the phosphothreonine; by host modification. The short motif at 183-193 (RVPVRTRPPRT) is the Nuclear localization signal element.

This sequence belongs to the adenoviridae histone-like nucleoprotein family. In terms of assembly, interacts with the core-capsid bridging protein; this interaction bridges the virus core to the capsid. Interacts with host NPM1; this interaction might play a role in placing the pre-histone-like nucleoprotein on the viral DNA or regulating viral gene expression. Interacts with host HMGB1; this interaction inhibits host immune response. In terms of processing, cleaved near the N-terminus by the viral protease during virion maturation to form the mature protein.

The protein resides in the virion. Its subcellular location is the host nucleus. It localises to the host nucleolus. In terms of biological role, plays a role in the inhibition of host immune response within the nucleus. Interacts with cellular nucleosomes and immobilizes the host immune danger signal HMGB1 on chromatin. In turn, prevents HMGB1 release out of the cell and thus decreases inflammation. Also plays a role in the wrapping and condensation of the viral DNA. May also promote viral genome import into the nucleus. In Homo sapiens (Human), this protein is Pre-histone-like nucleoprotein.